The primary structure comprises 704 residues: Elongation factor G (704 aa).

One can recognise a tr-type G domain in the interval 8–290 (EKYRNIGICA…GVVRYLPAPN (283 aa)). GTP-binding positions include 17-24 (AHVDAGKT), 88-92 (DTPGH), and 142-145 (NKMD).

Belongs to the TRAFAC class translation factor GTPase superfamily. Classic translation factor GTPase family. EF-G/EF-2 subfamily.

It is found in the cytoplasm. Its function is as follows. Catalyzes the GTP-dependent ribosomal translocation step during translation elongation. During this step, the ribosome changes from the pre-translocational (PRE) to the post-translocational (POST) state as the newly formed A-site-bound peptidyl-tRNA and P-site-bound deacylated tRNA move to the P and E sites, respectively. Catalyzes the coordinated movement of the two tRNA molecules, the mRNA and conformational changes in the ribosome. The sequence is that of Elongation factor G from Francisella tularensis subsp. mediasiatica (strain FSC147).